We begin with the raw amino-acid sequence, 375 residues long: MPRRLQQRGAGVKGPPASTSRRSHPASASAPRSPPAATTKPLLRWDEVPDDFVECFILSGYRRLPCTAQECLASVLKPTNETLNFWTHFIPLLLFLSKFCRLFFLGGSDVPFHHPWLLPLWCYASGVLLTFAMSCTAHVFSCLSLRLRAAFFYLDYASISYYGFGSTVAYYYYLLPSLSLLDARVMTPYVQQRLGWHVDCTRLIAVYRALVLPVAFVLAVACTVACCKSRTDWCSYPFALRTFVFVMPLSMACPIMLESWLFDLRGENPTLFVHFYRRYFWLVVAAFFNVSKIPERIQPGLFDIIGHSHQLFHIFTFLSIYDQVYYVEEGLRQFLQAPPAAPTFSGTVGYMLLLVVCLGLVIRKFLNSTEFCSKK.

The disordered stretch occupies residues Met1–Thr39. Residues Met1–Asn84 lie on the Cytoplasmic side of the membrane. Over residues Pro15–Thr39 the composition is skewed to low complexity. Residues Phe85–Leu105 form a helical membrane-spanning segment. The Extracellular segment spans residues Gly106–His114. The chain crosses the membrane as a helical span at residues Pro115–Cys135. Residues Thr136–Ser160 are Cytoplasmic-facing. A helical membrane pass occupies residues Tyr161–Leu181. Residues Asp182 to Leu203 lie on the Extracellular side of the membrane. A helical transmembrane segment spans residues Ile204 to Val224. Topologically, residues Ala225–Arg241 are cytoplasmic. Residues Thr242 to Phe262 form a helical membrane-spanning segment. At Asp263–Pro299 the chain is on the extracellular side. The chain crosses the membrane as a helical span at residues Gly300–Ile320. Topologically, residues Tyr321–Ala341 are cytoplasmic. Residues Pro342–Ile362 traverse the membrane as a helical segment. Residues Arg363–Lys375 lie on the Extracellular side of the membrane.

Belongs to the ADIPOR family. In terms of assembly, homodimer.

The protein resides in the cell membrane. Functionally, plasma membrane progesterone (P4) receptor coupled to G proteins. Seems to act through a G(s) mediated pathway. May be involved in regulating rapid P4 signaling in the nervous system. Also binds dehydroepiandrosterone (DHEA), pregnanolone, pregnenolone and allopregnanolone. In Mus musculus (Mouse), this protein is Membrane progesterone receptor epsilon.